Reading from the N-terminus, the 375-residue chain is DnaJ homolog subfamily B member 12 (375 aa).

M1 is subject to N-acetylmethionine. Residues 1 to 243 lie on the Cytoplasmic side of the membrane; the sequence is MESNKDEAER…DRRDNQGDGG (243 aa). Residues 45–92 are disordered; sequence ALIESLNQKPQTAGDQPPPTDTTHATHRKAGGTDAPSANGEAGGESTK. A compositionally biased stretch (polar residues) spans 49-58; that stretch reads SLNQKPQTAG. In terms of domain architecture, J spans 112–176; that stretch reads YEILGVSRGA…RKQYDQFGDD (65 aa). H185 is modified (pros-methylhistidine). A helical membrane pass occupies residues 244–264; the sequence is LGVFVQLMPILILILVSALSQ. Residues 265 to 375 are Lumenal-facing; it reads LMVSSPPYSL…LSEVQASLHG (111 aa).

It belongs to the DnaJ family. DNAJB12/DNAJB14 subfamily. Homodimer and homotetramer. Interacts (via J domain) with HSPA8/Hsc70. Forms a multiprotein complex, at least composed of DNAJB12, DNAJB14, HSPA8/Hsc70 and SGTA; interaction with DNAJB14 and HSPA8/Hsc70 is direct. In terms of processing, methylated at His-185 by METTL9.

The protein resides in the endoplasmic reticulum membrane. Its subcellular location is the nucleus membrane. Acts as a co-chaperone with HSPA8/Hsc70; required to promote protein folding and trafficking, prevent aggregation of client proteins, and promote unfolded proteins to endoplasmic reticulum-associated degradation (ERAD) pathway. Acts by determining HSPA8/Hsc70's ATPase and polypeptide-binding activities. Can also act independently of HSPA8/Hsc70: together with DNAJB14, acts as a chaperone that promotes maturation of potassium channels KCND2 and KCNH2 by stabilizing nascent channel subunits and assembling them into tetramers. While stabilization of nascent channel proteins is dependent on HSPA8/Hsc70, the process of oligomerization of channel subunits is independent of HSPA8/Hsc70. When overexpressed, forms membranous structures together with DNAJB14 and HSPA8/Hsc70 within the nucleus; the role of these structures, named DJANGOs, is still unclear. Its function is as follows. (Microbial infection) In case of infection by polyomavirus, involved in the virus endoplasmic reticulum membrane penetration and infection. This is DnaJ homolog subfamily B member 12 from Homo sapiens (Human).